A 430-amino-acid polypeptide reads, in one-letter code: Glutamine synthetase leaf isozyme, chloroplastic (430 aa).

A chloroplast-targeting transit peptide spans 1–49 (MAQILAPSTQWQMRITKTSPCATPITSKMWSSLVMKQTKKVAHSAKFRV). The region spanning 77 to 157 (IIAEYIWIGG…VVCDAYTPAG (81 aa)) is the GS beta-grasp domain. The interval 99 to 119 (SKPVSHPSEVPKWNYDGSSTG) is disordered. Residues 161-430 (PTNKRHRAAE…LAAQKIALKV (270 aa)) form the GS catalytic domain.

The protein belongs to the glutamine synthetase family. In terms of assembly, homooctamer.

It is found in the plastid. It localises to the chloroplast. It catalyses the reaction L-glutamate + NH4(+) + ATP = L-glutamine + ADP + phosphate + H(+). Functionally, the light-modulated chloroplast enzyme, encoded by a nuclear gene and expressed primarily in leaves, is responsible for the reassimilation of the ammonia generated by photorespiration. This chain is Glutamine synthetase leaf isozyme, chloroplastic (GS2), found in Pisum sativum (Garden pea).